The sequence spans 422 residues: O-mycaminosyltylonolide 6-deoxyallosyltransferase (422 aa).

The protein belongs to the glycosyltransferase 28 family.

The enzyme catalyses 5-O-beta-D-mycaminosyltylonolide + dTDP-6-deoxy-alpha-D-allose = demethyllactenocin + dTDP + H(+). In terms of biological role, involved in the biosynthesis of the macrolide antibiotic tylosin derived from the polyketide lactone tylactone. Catalyzes the transfer of 6-deoxy-alpha-D-allose from dTDP-6-deoxy-alpha-D-allose to O-mycaminosyltylonolide (OMT) to yield demethyllactenocin. The polypeptide is O-mycaminosyltylonolide 6-deoxyallosyltransferase (Streptomyces fradiae (Streptomyces roseoflavus)).